The sequence spans 1402 residues: Eukaryotic translation initiation factor 4 gamma 1 (1402 aa).

Disordered stretches follow at residues 1-123 (MSGA…SPEP) and 165-402 (HEPN…YEYK). Thr11 and Thr27 each carry phosphothreonine. Residues 53-64 (GPEHSPSESQPS) are compositionally biased toward low complexity. Positions 65 to 76 (SPSPTPSPPPIL) are enriched in pro residues. Ser120 bears the Phosphoserine mark. The segment covering 238-251 (ASATPPAVPSATPA) has biased composition (low complexity). Acidic residues predominate over residues 261-275 (QEEEGEEEEEEEEGE). Basic and acidic residues-rich tracts occupy residues 280-290 (ESDKGGEDLHP) and 324-340 (KELN…DAFK). The span at 359 to 370 (PTPESEGSSGPS) shows a compositional bias: low complexity. A compositionally biased stretch (basic and acidic residues) spans 379–388 (WDAKEDKIHN). Thr452 is subject to Phosphothreonine. 4 disordered regions span residues 476–517 (ANLG…PPKG), 536–563 (AEKA…GSKT), 600–636 (SKGS…ATTE), and 828–1028 (MAKG…KREA). The segment covering 479–488 (GRPALSSRGP) has biased composition (low complexity). Residues Arg490 and Arg499 each carry the omega-N-methylarginine modification. Positions 547-563 (TAADKDRGEEDADGSKT) are enriched in basic and acidic residues. The 227-residue stretch at 567–793 (FRRVRSILNK…QDVLDLRQSN (227 aa)) folds into the MIF4G domain. Polar residues predominate over residues 602-621 (GSLTSSLRRPFQNPTSQWPS). Ser832 carries the post-translational modification Phosphoserine. An omega-N-methylarginine mark is found at Arg836 and Arg846. Phosphoserine occurs at positions 881 and 896. The span at 892–913 (GGRLSWGKGSSGSGAKPSDAAS) shows a compositional bias: low complexity. An N6-acetyllysine modification is found at Lys899. Residues 918 to 937 (PATSTLNRFSALQQAVPTES) show a composition bias toward polar residues. Ser948 and Ser950 each carry phosphoserine. Over residues 949–981 (LSRERGGKAGEPRRRLERSERGGDRGDRLDRAR) the composition is skewed to basic and acidic residues. Ser988 is subject to Phosphoserine; by PKC/PRKCA. Residues 989-1028 (FSKEVEERSRERPSQPEGLRKAASLTEDRDRGRDAAKREA) are compositionally biased toward basic and acidic residues. 3 positions are modified to phosphoserine: Ser990, Ser997, and Ser1012. Thr1014 carries the phosphothreonine modification. Phosphoserine occurs at positions 1034 and 1041. In terms of domain architecture, MI spans 1044–1166 (ELEKKSKAII…PMGELFREIT (123 aa)). The region spanning 1231–1401 (EESEAPGQRA…REVEEEESDH (171 aa)) is the W2 domain. The residue at position 1399 (Ser1399) is a Phosphoserine.

This sequence belongs to the eukaryotic initiation factor 4G family. EIF4F is a multi-subunit complex, the composition of which varies with external and internal environmental conditions. It is composed of at least EIF4A, EIF4E (cap-binding) and EIF4G1/EIF4G3. Interacts with eIF3 complex, mutually exclusive with EIF4A1 or EIF4A2, EIF4E and through its N-terminus with PABPC1. Interacts with EIF4E or with EIF1 (mutually exclusive) through a common binding site. Interacts through its C-terminus with the serine/threonine kinases MKNK1, and with MKNK2. Appears to act as a scaffold protein, holding these enzymes in place to phosphorylate EIF4E. Non-phosphorylated EIF4EBP1 competes with EIF4G1/EIF4G3 to interact with EIF4E; insulin stimulated MAP-kinase (MAPK1 and MAPK3) phosphorylation of EIF4EBP1 causes dissociation of the complex allowing EIF4G1/EIF4G3 to bind and consequent initiation of translation. EIF4G1/EIF4G3 interacts with PABPC1 to bring about circularization of the mRNA. Interacts with EIF4E3. Interacts with CIRBP and MIF4GD. Interacts with RBM4. Interacts with HNRNPD/AUF1; the interaction requires RNA. Interacts with DDX3X; the interaction requires RNA. Interacts with DAZAP2. Phosphorylated at multiple sites in vivo. Phosphorylation at Ser-988 by PRKCA induces binding to MKNK1.

The protein resides in the cytoplasm. The protein localises to the nucleus. It is found in the stress granule. Its function is as follows. Component of the protein complex eIF4F, which is involved in the recognition of the mRNA cap, ATP-dependent unwinding of 5'-terminal secondary structure and recruitment of mRNA to the ribosome. Exists in two complexes, either with EIF1 or with EIF4E (mutually exclusive). Together with EIF1, is required for leaky scanning, in particular for avoiding cap-proximal start codon. Together with EIF4E, antagonizes the scanning promoted by EIF1-EIF4G1 and locates the start codon (through a TISU element) without scanning. As a member of the eIF4F complex, required for endoplasmic reticulum stress-induced ATF4 mRNA translation. This chain is Eukaryotic translation initiation factor 4 gamma 1 (EIF4G1), found in Oryctolagus cuniculus (Rabbit).